The chain runs to 578 residues: tRNA (guanine(26)-N(2))-dimethyltransferase (578 aa).

In terms of domain architecture, Trm1 methyltransferase spans 18-451 (NVIRERNAEI…APPAVLWDIL (434 aa)). Arginine 43 provides a ligand contact to S-adenosyl-L-methionine. The disordered stretch occupies residues 63 to 92 (EKALKKQRKKVKEQEDEKTTPVPEDPPVYE). Residues arginine 113 and aspartate 131 each coordinate S-adenosyl-L-methionine. Zn(2+) contacts are provided by cysteine 295, cysteine 298, cysteine 335, and cysteine 338. Residues 491 to 578 (EANPKSRKSA…PKQPKLEATA (88 aa)) form a disordered region. The segment covering 564–578 (DVEHLPKQPKLEATA) has biased composition (basic and acidic residues).

It belongs to the class I-like SAM-binding methyltransferase superfamily. Trm1 family.

The catalysed reaction is guanosine(26) in tRNA + 2 S-adenosyl-L-methionine = N(2)-dimethylguanosine(26) in tRNA + 2 S-adenosyl-L-homocysteine + 2 H(+). Functionally, dimethylates a single guanine residue at position 26 of most tRNAs using S-adenosyl-L-methionine as donor of the methyl groups. This is tRNA (guanine(26)-N(2))-dimethyltransferase from Drosophila melanogaster (Fruit fly).